Consider the following 177-residue polypeptide: O-acetyl-ADP-ribose deacetylase (177 aa).

In terms of domain architecture, Macro spans 1-175; it reads MNSRIHVIHG…LYQRLLTQQG (175 aa). Substrate contacts are provided by residues 11–12, N25, 33–35, and 122–126; these read DI, GVD, and STGVY. D35 serves as the catalytic Proton acceptor.

Belongs to the MacroD-type family. YmdB subfamily. Homodimer. Interacts with RNase III.

The catalysed reaction is 3''-O-acetyl-ADP-D-ribose + H2O = ADP-D-ribose + acetate + H(+). The enzyme catalyses 2''-O-acetyl-ADP-D-ribose + H2O = ADP-D-ribose + acetate + H(+). Deacetylates O-acetyl-ADP ribose to yield ADP-ribose and free acetate. Down-regulates ribonuclease 3 (RNase III) activity. Acts by interacting directly with the region of the ribonuclease that is required for dimerization/activation. The protein is O-acetyl-ADP-ribose deacetylase of Citrobacter rodentium (strain ICC168) (Citrobacter freundii biotype 4280).